The sequence spans 283 residues: Pantothenate synthetase (283 aa).

Residue 26–33 (MGNLHEGH) coordinates ATP. The Proton donor role is filled by His-33. Gln-57 contacts (R)-pantoate. Residue Gln-57 participates in beta-alanine binding. Residue 144–147 (GKKD) coordinates ATP. Gln-150 serves as a coordination point for (R)-pantoate. ATP contacts are provided by residues Val-173 and 181–184 (LSSR).

The protein belongs to the pantothenate synthetase family. As to quaternary structure, homodimer.

It localises to the cytoplasm. The catalysed reaction is (R)-pantoate + beta-alanine + ATP = (R)-pantothenate + AMP + diphosphate + H(+). It participates in cofactor biosynthesis; (R)-pantothenate biosynthesis; (R)-pantothenate from (R)-pantoate and beta-alanine: step 1/1. Catalyzes the condensation of pantoate with beta-alanine in an ATP-dependent reaction via a pantoyl-adenylate intermediate. This chain is Pantothenate synthetase, found in Ralstonia pickettii (strain 12J).